The sequence spans 144 residues: Large ribosomal subunit protein uL15 (144 aa).

Residues 1-53 (MRLNSLSPAEGAKHSAKRLGRGIGSGLGKTGGRGHKGQKSRTGGGVRRGFEGG) are disordered. Over residues 21–31 (RGIGSGLGKTG) the composition is skewed to gly residues.

This sequence belongs to the universal ribosomal protein uL15 family. In terms of assembly, part of the 50S ribosomal subunit.

In terms of biological role, binds to the 23S rRNA. The polypeptide is Large ribosomal subunit protein uL15 (Glaesserella parasuis serovar 5 (strain SH0165) (Haemophilus parasuis)).